A 222-amino-acid polypeptide reads, in one-letter code: MLPQGLIVSCQALPDEPLHSSFIMSKMALAAYEGGAVGIRANSKADIIEIKKEVDLPVIGIVKRDYAHSDVFITATSKEIDELIESNCEVIALDATKQTRPKESLSELVSYIRNKAPNVEIMADISTLEEAKNADELGFDYVGTTLRGYTSYTKGHILYENNYQFLKDVLAHVNAKVIAEGNVITPEMFKDVTDLGVHCTVVGGAITRPKEITKRFINAFDK.

It belongs to the NanE family.

It catalyses the reaction an N-acyl-D-glucosamine 6-phosphate = an N-acyl-D-mannosamine 6-phosphate. The protein operates within amino-sugar metabolism; N-acetylneuraminate degradation; D-fructose 6-phosphate from N-acetylneuraminate: step 3/5. Converts N-acetylmannosamine-6-phosphate (ManNAc-6-P) to N-acetylglucosamine-6-phosphate (GlcNAc-6-P). The protein is Putative N-acetylmannosamine-6-phosphate 2-epimerase of Staphylococcus saprophyticus subsp. saprophyticus (strain ATCC 15305 / DSM 20229 / NCIMB 8711 / NCTC 7292 / S-41).